The following is a 462-amino-acid chain: Golgi-associated PDZ and coiled-coil motif-containing protein (462 aa).

Residues 83–194 (KAQSVSQINH…EDEALRGHIA (112 aa)) adopt a coiled-coil conformation. The 84-residue stretch at 288 to 371 (KVLLLKEDHE…EIEFEVVYVA (84 aa)) folds into the PDZ domain. The segment at 427–449 (TDTHENGDLGTASETPLDDGASK) is disordered.

As to quaternary structure, homooligomer. Interacts with FZD5. Interacts with FZD8. Interacts with GRID2 and BECN1. Interacts with CSPG5. Interacts with CLCN3. Interacts with STX6. Interacts with CFTR. Interacts with ASIC3. Interacts with GOLGA3. Interacts with NLGN1. Interacts with RHOQ. Interacts with MARCHF2; the interaction leads to CFTR ubiquitination and degradation. May interact with CACNG2. Interacts with CCDC62.

The protein resides in the cytoplasm. The protein localises to the golgi apparatus membrane. Its subcellular location is the golgi apparatus. It is found in the trans-Golgi network membrane. It localises to the synapse. The protein resides in the postsynaptic density. The protein localises to the cell projection. Its subcellular location is the dendrite. Plays a role in intracellular protein trafficking and degradation. May regulate CFTR chloride currents and acid-induced ASIC3 currents by modulating cell surface expression of both channels. May also regulate the intracellular trafficking of the ADR1B receptor. May play a role in autophagy. Together with MARCHF2 mediates the ubiquitination and lysosomal degradation of CFTR. Overexpression results in CFTR intracellular retention and degradation in the lysosomes. The polypeptide is Golgi-associated PDZ and coiled-coil motif-containing protein (GOPC) (Pongo abelii (Sumatran orangutan)).